The following is a 233-amino-acid chain: Large ribosomal subunit protein uL1 (233 aa).

This sequence belongs to the universal ribosomal protein uL1 family. In terms of assembly, part of the 50S ribosomal subunit.

In terms of biological role, binds directly to 23S rRNA. The L1 stalk is quite mobile in the ribosome, and is involved in E site tRNA release. Functionally, protein L1 is also a translational repressor protein, it controls the translation of the L11 operon by binding to its mRNA. The sequence is that of Large ribosomal subunit protein uL1 from Psychrobacter arcticus (strain DSM 17307 / VKM B-2377 / 273-4).